The primary structure comprises 568 residues: Phosphomethylpyrimidine synthase (568 aa).

Substrate contacts are provided by residues Asn-188, Met-217, Tyr-246, His-282, 302 to 304 (SRG), 343 to 346 (DGLR), and Glu-382. His-386 provides a ligand contact to Zn(2+). Residue Tyr-409 coordinates substrate. His-450 is a binding site for Zn(2+). [4Fe-4S] cluster-binding residues include Cys-530, Cys-533, and Cys-538.

It belongs to the ThiC family. In terms of assembly, homodimer. [4Fe-4S] cluster serves as cofactor.

It catalyses the reaction 5-amino-1-(5-phospho-beta-D-ribosyl)imidazole + S-adenosyl-L-methionine = 4-amino-2-methyl-5-(phosphooxymethyl)pyrimidine + CO + 5'-deoxyadenosine + formate + L-methionine + 3 H(+). It participates in cofactor biosynthesis; thiamine diphosphate biosynthesis. Its function is as follows. Catalyzes the synthesis of the hydroxymethylpyrimidine phosphate (HMP-P) moiety of thiamine from aminoimidazole ribotide (AIR) in a radical S-adenosyl-L-methionine (SAM)-dependent reaction. This Idiomarina loihiensis (strain ATCC BAA-735 / DSM 15497 / L2-TR) protein is Phosphomethylpyrimidine synthase.